Reading from the N-terminus, the 452-residue chain is Probable 1,4-beta-D-glucan cellobiohydrolase A (452 aa).

The first 17 residues, 1-17 (MHQRALLFSALAVAANA), serve as a signal peptide directing secretion. An N-linked (GlcNAc...) asparagine glycan is attached at Asn-81. Glu-226 serves as the catalytic Nucleophile. The Proton donor role is filled by Glu-231. Residue Asn-284 is glycosylated (N-linked (GlcNAc...) asparagine). The disordered stretch occupies residues 406–432 (DPSKPGVARGTCEHGAGDPEKVESQHP). Over residues 416–431 (TCEHGAGDPEKVESQH) the composition is skewed to basic and acidic residues.

This sequence belongs to the glycosyl hydrolase 7 (cellulase C) family.

Its subcellular location is the secreted. The enzyme catalyses Hydrolysis of (1-&gt;4)-beta-D-glucosidic linkages in cellulose and cellotetraose, releasing cellobiose from the non-reducing ends of the chains.. Functionally, the biological conversion of cellulose to glucose generally requires three types of hydrolytic enzymes: (1) Endoglucanases which cut internal beta-1,4-glucosidic bonds; (2) Exocellobiohydrolases that cut the disaccharide cellobiose from the non-reducing end of the cellulose polymer chain; (3) Beta-1,4-glucosidases which hydrolyze the cellobiose and other short cello-oligosaccharides to glucose. In Neosartorya fischeri (strain ATCC 1020 / DSM 3700 / CBS 544.65 / FGSC A1164 / JCM 1740 / NRRL 181 / WB 181) (Aspergillus fischerianus), this protein is Probable 1,4-beta-D-glucan cellobiohydrolase A (cbhA).